The sequence spans 405 residues: Serine--glyoxylate aminotransferase (405 aa).

Lys196 is subject to N6-(pyridoxal phosphate)lysine.

It belongs to the class-V pyridoxal-phosphate-dependent aminotransferase family. Pyridoxal 5'-phosphate serves as cofactor.

It carries out the reaction glyoxylate + L-serine = 3-hydroxypyruvate + glycine. Its pathway is one-carbon metabolism; formaldehyde assimilation via serine pathway. The protein is Serine--glyoxylate aminotransferase (sgaA) of Hyphomicrobium methylovorum.